The primary structure comprises 964 residues: Reticulon-3 (964 aa).

A compositionally biased stretch (low complexity) spans 1 to 24 (MAESSAATQSPSVSSSSSGAEPSA). Disordered stretches follow at residues 1-32 (MAESSAATQSPSVSSSSSGAEPSALGGGGGSP), 68-109 (AGLS…SETL), and 179-200 (WVVKDQEPKNPNKVPDGEDRSA). At A2 the chain carries N-acetylalanine. Residues 2–795 (AESSAATQSP…KKTGFVFGTT (794 aa)) lie on the Cytoplasmic side of the membrane. Position 31 is a phosphoserine (S31). Residues 80 to 91 (SKSMTSSFLSSS) are compositionally biased toward low complexity. A phosphoserine mark is found at S217, S225, S230, S233, S270, S303, and S429. Positions 479 to 536 (ITEKPDSLPSAAAKTSEREIKETPSRETVRSEMCENSEQPQAQPETPTQKSLEGEVAS) are disordered. Residues 493-511 (TSEREIKETPSRETVRSEM) show a composition bias toward basic and acidic residues. Residues 516–527 (EQPQAQPETPTQ) show a composition bias toward low complexity. Phosphoserine is present on S529. T593 is modified (phosphothreonine). Phosphoserine occurs at positions 596, 597, and 673. 2 disordered regions span residues 645 to 674 (ELSGSETKNIKSKYSEDSRETTGGAPTMSP) and 697 to 723 (VQDEGISSGGKLKQTFAPQSGPQSSSD). Residues 712–723 (FAPQSGPQSSSD) are compositionally biased toward polar residues. Residues 776–964 (VHDLIFWRDV…LPGIAKKKAE (189 aa)) form the Reticulon domain. The segment at residues 796 to 819 (LIMLLSLAAFSVISVVSYLILALL) is an intramembrane region (helical). The Cytoplasmic portion of the chain corresponds to 820–876 (SVTISFRVYKSVIQAVQKSEEGHPFKAYLDVDITLSSEAFHNYMNAAMVHVNKALKL). The helical intramembrane region spans 877–899 (IIRLFLVEDLVDSLKLAVFMWLM). Topologically, residues 900 to 903 (TYVG) are cytoplasmic. An intramembrane region (helical) is located at residues 904 to 926 (AVFNGITLLILAELLVFSVPIVY). The interaction with FADD stretch occupies residues 919-964 (VFSVPIVYEKYKTQIDHYVGIARDQTKSIVEKIQAKLPGIAKKKAE). Over 927 to 964 (EKYKTQIDHYVGIARDQTKSIVEKIQAKLPGIAKKKAE) the chain is Cytoplasmic. The segment at 932 to 934 (QID) is interaction with BACE1.

Homodimer. Interacts with RTN4. Isoform 3 interacts with BACE1, BACE2, BCL2 and FADD. Interacts with ATL1 and ATL2. Isoform 3 interacts with TMEM33. Interacts with ZFYVE27 and with KIF5A in a ZFYVE27-dependent manner. Interacts with RIGI. Interacts with TRIM25. As to expression, isoform 1, isoform 3, isoform 4 and isoform 5 are expressed in spinal cord. Isoform 1 is present in brain, where it is expressed in the neurons of cerebral cortex, hippocampus, hypothalamus and cerebellum (at protein level).

The protein localises to the endoplasmic reticulum membrane. Its subcellular location is the golgi apparatus membrane. Its function is as follows. May be involved in membrane trafficking in the early secretory pathway. Inhibits BACE1 activity and amyloid precursor protein processing. May induce caspase-8 cascade and apoptosis. May favor BCL2 translocation to the mitochondria upon endoplasmic reticulum stress. Induces the formation of endoplasmic reticulum tubules. Also acts as an inflammation-resolving regulator by interacting with both TRIM25 and RIGI, subsequently impairing RIGI 'Lys-63'-linked polyubiquitination leading to IRF3 and NF-kappa-B inhibition. This Mus musculus (Mouse) protein is Reticulon-3 (Rtn3).